Consider the following 126-residue polypeptide: C-X-C motif chemokine 9 (126 aa).

Positions 1–21 (MKSAVLFLLGIIFLEQCGVRG) are cleaved as a signal peptide. Disulfide bonds link Cys30–Cys57 and Cys32–Cys73. Residue Asn58 is glycosylated (N-linked (GlcNAc...) asparagine). A disordered region spans residues 91 to 126 (KISQKKKQKRGKKHQKNMKNRKPKTPQSRRRSRKTT). Over residues 93 to 126 (SQKKKQKRGKKHQKNMKNRKPKTPQSRRRSRKTT) the composition is skewed to basic residues.

The protein belongs to the intercrine alpha (chemokine CxC) family.

The protein resides in the secreted. Functionally, may be a cytokine that affects the growth, movement, or activation state of cells that participate in immune and inflammatory response. This chain is C-X-C motif chemokine 9 (Cxcl9), found in Mus musculus (Mouse).